We begin with the raw amino-acid sequence, 313 residues long: Protein-glutamine deamidase Cif (313 aa).

Catalysis depends on residues cysteine 128, histidine 186, and glutamine 205.

Belongs to the Cif family.

The protein localises to the secreted. Its subcellular location is the host nucleus. It carries out the reaction L-glutaminyl-[protein] + H2O = L-glutamyl-[protein] + NH4(+). Protein-glutamine deamidase effector that inhibits the host cell cycle and other key cellular processes such as the actin network and programmed-cell death. Acts by mediating the side chain deamidation of 'Gln-40' of host NEDD8, converting it to glutamate, thereby abolishing the activity of cullin-RING-based E3 ubiquitin-protein ligase complexes (CRL complexes). Inactivation of CRL complexes prevents ubiquitination and subsequent degradation of the cyclin-dependent kinase inhibitors CDKN1A/p21 and CDKN1B/p27, leading to G1 and G2 cell cycle arrests in host cells. Deamidation of 'Gln-40' of host NEDD8 also triggers macrophage-specific programmed cell death. Also able to catalyze deamidation of 'Gln-40' of host ubiquitin in vitro; however, NEDD8 constitutes the preferred substrate in vivo. In Photorhabdus laumondii subsp. laumondii (strain DSM 15139 / CIP 105565 / TT01) (Photorhabdus luminescens subsp. laumondii), this protein is Protein-glutamine deamidase Cif.